The following is a 290-amino-acid chain: Coiled-coil domain-containing protein 137 (290 aa).

4 disordered regions span residues 1-92 (MARP…EAQV), 98-117 (LEKE…FKQR), 139-181 (LSKN…EARA), and 269-290 (RQEM…HACL). The span at 20 to 39 (SGQPQGRRQQQAQGQQRSAS) shows a compositional bias: low complexity. Basic and acidic residues predominate over residues 56 to 79 (KNQDEQEIPFRLREIMRSRQEMKK). The stretch at 66 to 89 (RLREIMRSRQEMKKTLSNKKRKKE) forms a coiled coil. Residues 154 to 163 (PKKEKSERKK) are compositionally biased toward basic and acidic residues. Residues 155-192 (KKEKSERKKAFQKRRLEKAQRKREARAVDRLEQELLKD) are a coiled coil. Over residues 164–178 (AFQKRRLEKAQRKRE) the composition is skewed to basic residues.

It localises to the chromosome. This Mus musculus (Mouse) protein is Coiled-coil domain-containing protein 137 (Ccdc137).